Consider the following 346-residue polypeptide: Large ribosomal subunit protein uL10 (346 aa).

Residues 305-346 are disordered; it reads EVPAAPAPEAKEEKKEEAEEEEEEKKEVSEEDLSAGLGALFG. Residues 322 to 337 are compositionally biased toward acidic residues; it reads AEEEEEEKKEVSEEDL.

It belongs to the universal ribosomal protein uL10 family. As to quaternary structure, part of the 50S ribosomal subunit. Forms part of the ribosomal stalk which helps the ribosome interact with GTP-bound translation factors. Forms a heptameric L10(L12)2(L12)2(L12)2 complex, where L10 forms an elongated spine to which the L12 dimers bind in a sequential fashion.

Functionally, forms part of the ribosomal stalk, playing a central role in the interaction of the ribosome with GTP-bound translation factors. This is Large ribosomal subunit protein uL10 from Ignicoccus hospitalis (strain KIN4/I / DSM 18386 / JCM 14125).